Consider the following 156-residue polypeptide: Deoxyuridine 5'-triphosphate nucleotidohydrolase (156 aa).

Residues 76–78 (RSG), Asn89, 93–95 (TVD), and Lys103 each bind substrate.

It belongs to the dUTPase family. Requires Mg(2+) as cofactor.

It carries out the reaction dUTP + H2O = dUMP + diphosphate + H(+). It functions in the pathway pyrimidine metabolism; dUMP biosynthesis; dUMP from dCTP (dUTP route): step 2/2. This enzyme is involved in nucleotide metabolism: it produces dUMP, the immediate precursor of thymidine nucleotides and it decreases the intracellular concentration of dUTP so that uracil cannot be incorporated into DNA. The sequence is that of Deoxyuridine 5'-triphosphate nucleotidohydrolase from Agrobacterium fabrum (strain C58 / ATCC 33970) (Agrobacterium tumefaciens (strain C58)).